Consider the following 135-residue polypeptide: Beta/delta-urticatoxin-Ui2a (135 aa).

An N-terminal signal peptide occupies residues 1-18 (MGAIVLVAIMALVASSSA). Residues 19–72 (FSDDEQNMMNAEGEKGIRSYSAADDVSDMIESLFVNSGNRNLVLMMLSGRPQPN) constitute a propeptide that is removed on maturation. Disulfide bonds link C75–C92, C82–C97, C91–C105, C107–C121, C114–C126, and C120–C134.

It belongs to the urticatoxin-2 family. As to expression, expressed in trichomes, that are stiff epidermal hairs located on the surface of petioles and leaves.

The protein localises to the secreted. Its function is as follows. Plant defense neurotoxin that causes pain and systemic symptoms in mammals via modulation of voltage-gated sodium channels (Nav). Potent modulator of human Nav1.5/SCN5A (EC(50)=55 nM), Nav1.6/SCN8A (EC(50)=0.86 nM), and Nav1.7/SCN9A (EC(50)=208 nM), where it shifts the activation threshold to more negative potentials and delays fast inactivation. Also shifts the voltage-dependence of steady-state fast inactivation of Nav1.6/SCN8A, but not that of Nav1.5/SCN5A or Nav1.7/SCN9A. On Nav1.7/SCN9A, principally acts by binding to extracellular loops of domain IV (Nav site 3). In vivo, intraplantar injection into mice causes numerous dose-dependent, immediate, and long-lasting spontaneous pain behaviors, while no swelling is observed in the injected paw. At the highest doses tested, systemic symptoms including hypokinesia and hypersalivation are observed. The chain is Beta/delta-urticatoxin-Ui2a from Urtica incisa (Scrub nettle).